The following is a 471-amino-acid chain: ATP synthase subunit beta (471 aa).

156–163 (GGAGVGKT) lines the ATP pocket.

It belongs to the ATPase alpha/beta chains family. In terms of assembly, F-type ATPases have 2 components, CF(1) - the catalytic core - and CF(0) - the membrane proton channel. CF(1) has five subunits: alpha(3), beta(3), gamma(1), delta(1), epsilon(1). CF(0) has three main subunits: a(1), b(2) and c(9-12). The alpha and beta chains form an alternating ring which encloses part of the gamma chain. CF(1) is attached to CF(0) by a central stalk formed by the gamma and epsilon chains, while a peripheral stalk is formed by the delta and b chains.

Its subcellular location is the cell membrane. The catalysed reaction is ATP + H2O + 4 H(+)(in) = ADP + phosphate + 5 H(+)(out). Functionally, produces ATP from ADP in the presence of a proton gradient across the membrane. The catalytic sites are hosted primarily by the beta subunits. This Lysinibacillus sphaericus (strain C3-41) protein is ATP synthase subunit beta.